The primary structure comprises 1083 residues: Glutamate receptor-interacting protein 2 (1083 aa).

3 consecutive PDZ domains span residues 58-141 (IVEL…EYEL), 156-244 (TIEI…EYDV), and 258-342 (LVEI…LPAH). Residues 408–422 (AGTPGFSSQNSNTLP) are compositionally biased toward polar residues. The segment at 408 to 460 (AGTPGFSSQNSNTLPRTVHPMSPRTTMNRRRQKRKDHKSSLSLASSTVGPGGQ) is disordered. Residues 434 to 444 (MNRRRQKRKDH) are compositionally biased toward basic residues. 3 consecutive PDZ domains span residues 468 to 555 (EIIL…EIEF), 569 to 652 (HVKL…RKDE), and 667 to 749 (TVEL…KKQT). Disordered regions lie at residues 754-783 (PQRLSDSMNEGSDPEDDLTDSQKTSKLSEI), 853-872 (NEQDWEKPTRYPSQPNGLET), and 936-965 (GSHHISSNSPKKENKLSQDARSKKEEVHNA). The span at 774–783 (SQKTSKLSEI) shows a compositional bias: polar residues. Over residues 945–963 (PKKENKLSQDARSKKEEVH) the composition is skewed to basic and acidic residues. The 83-residue stretch at 974–1056 (KVTVQKDMDT…RLDLVISRGL (83 aa)) folds into the PDZ 7 domain.

The protein belongs to the GRIP2 family. In terms of tissue distribution, enriched in the mitochondrial cloud of stage I oocytes, before becoming concentrated at the tip of the vegetal cortex in stage II oocytes. Expression becomes localized to the germ plasm of stage III-IV oocytes and early cleavage stages. At the tailbud stage, localizes to the migrating primordial germ cells (PGCs) until PGC migration is complete (stage 40), at which point expression disappears. In the adult, expressed in the brain, ovary, eye, muscle, spinal cord and very weakly in adipocytes.

Its subcellular location is the cytoplasm. Its function is as follows. Plays an important role in primordial germ cell (PGC) maintenance and efficiency of PGC migration. This Xenopus laevis (African clawed frog) protein is Glutamate receptor-interacting protein 2.